The chain runs to 206 residues: Ribosomal RNA small subunit methyltransferase G (206 aa).

S-adenosyl-L-methionine-binding positions include Gly-71, Phe-76, 125–126 (IE), and Arg-139.

Belongs to the methyltransferase superfamily. RNA methyltransferase RsmG family.

It localises to the cytoplasm. The catalysed reaction is guanosine(527) in 16S rRNA + S-adenosyl-L-methionine = N(7)-methylguanosine(527) in 16S rRNA + S-adenosyl-L-homocysteine. Specifically methylates the N7 position of guanine in position 527 of 16S rRNA. The chain is Ribosomal RNA small subunit methyltransferase G from Cereibacter sphaeroides (strain ATCC 17029 / ATH 2.4.9) (Rhodobacter sphaeroides).